A 466-amino-acid chain; its full sequence is 3-isopropylmalate dehydratase large subunit 1 (466 aa).

Cys347, Cys407, and Cys410 together coordinate [4Fe-4S] cluster.

The protein belongs to the aconitase/IPM isomerase family. LeuC type 1 subfamily. In terms of assembly, heterodimer of LeuC and LeuD. It depends on [4Fe-4S] cluster as a cofactor.

The catalysed reaction is (2R,3S)-3-isopropylmalate = (2S)-2-isopropylmalate. Its pathway is amino-acid biosynthesis; L-leucine biosynthesis; L-leucine from 3-methyl-2-oxobutanoate: step 2/4. Its function is as follows. Catalyzes the isomerization between 2-isopropylmalate and 3-isopropylmalate, via the formation of 2-isopropylmaleate. The chain is 3-isopropylmalate dehydratase large subunit 1 from Salmonella choleraesuis (strain SC-B67).